The primary structure comprises 135 residues: Class I hydrophobin dewA (135 aa).

The N-terminal stretch at 1-18 (MRFIVSLLAFTAAATATA) is a signal peptide. Disulfide bonds link cysteine 44-cysteine 114, cysteine 51-cysteine 108, cysteine 52-cysteine 84, and cysteine 115-cysteine 122. Asparagine 60 carries N-linked (GlcNAc...) asparagine glycosylation.

This sequence belongs to the fungal hydrophobin family. Forms homodimers at high concentrations, and these dimers are off-pathway to rodlet formation. Dissociation of the dimers into monomers, with resultant exposure of the hydrophobic face, is necessary for self-assembly to form functional amyloid fibrils called rodlets. Self-assembly into fibrillar rodlets occurs spontaneously at hydrophobic:hydrophilic interfaces and the rodlets further associate laterally to form amphipathic monolayers.

The protein resides in the secreted. The protein localises to the spore wall. In terms of biological role, aerial growth, conidiation, and dispersal of filamentous fungi in the environment rely upon a capability of their secreting small amphipathic proteins called hydrophobins (HPBs) with low sequence identity. Class I can self-assemble into an outermost layer of rodlet bundles on aerial cell surfaces, conferring cellular hydrophobicity that supports fungal growth, development and dispersal; whereas Class II form highly ordered films at water-air interfaces through intermolecular interactions but contribute nothing to the rodlet structure. DewA is a class I hydrophobin that contributes to spore wall hydrophobicity. The sequence is that of Class I hydrophobin dewA from Emericella nidulans (strain FGSC A4 / ATCC 38163 / CBS 112.46 / NRRL 194 / M139) (Aspergillus nidulans).